The sequence spans 962 residues: Protocadherin gamma-A4 (962 aa).

Residues 1 to 24 (MHFILDPEDPGAPQASTEGKPKHR) form a disordered region. An N-terminal signal peptide occupies residues 1–59 (MHFILDPEDPGAPQASTEGKPKHRRLRGGVVMAAPPARPDHTRLLQICLLLGVLVEIRA). 6 consecutive Cadherin domains span residues 60–164 (EQIL…PPSF), 165–273 (GTEQ…APVF), 274–378 (TQPE…APEV), 379–483 (TVTS…PPTF), 484–598 (PHAS…YPTF), and 601–713 (DGST…KPSA). Residues 60-723 (EQILYSVFEE…DPDDSGLTLY (664 aa)) are Extracellular-facing. N-linked (GlcNAc...) asparagine glycosylation is found at Asn450 and Asn576. A helical membrane pass occupies residues 724 to 744 (LVVAVAAVSCVFLAFVTVLLA). Residues 745-962 (LKLRRWHKSR…KKKSGKKEKK (218 aa)) are Cytoplasmic-facing. Disordered stretches follow at residues 832-871 (KGDPNLQQAPPNTDWRFSQAQRPGTSGSQNGDDTGTWPNN) and 932-962 (ATLTNAAGKRDGKAPAGGNGNKKKSGKKEKK). Positions 836–871 (NLQQAPPNTDWRFSQAQRPGTSGSQNGDDTGTWPNN) are enriched in polar residues. Over residues 952 to 962 (NKKKSGKKEKK) the composition is skewed to basic residues.

The protein resides in the cell membrane. Its function is as follows. Potential calcium-dependent cell-adhesion protein. May be involved in the establishment and maintenance of specific neuronal connections in the brain. The protein is Protocadherin gamma-A4 (PCDHGA4) of Homo sapiens (Human).